Here is a 157-residue protein sequence, read N- to C-terminus: Nascent polypeptide-associated complex subunit beta (157 aa).

The tract at residues 1–31 is disordered; the sequence is MPVDPEKLAKLQKSTAKKVGGSRVKAKKGVK. Residues 33 to 98 enclose the NAC-A/B domain; that stretch reads EQDDTKLIET…PQEKNITQLI (66 aa). The disordered stretch occupies residues 125–157; that stretch reads NPKDFGAAGEAGATEEANEDIPDLVDQKFDDVE. Low complexity predominate over residues 130 to 139; the sequence is GAAGEAGATE.

It belongs to the NAC-beta family. Part of the nascent polypeptide-associated complex (NAC), consisting of EGD2 and EGD1. NAC associates with ribosomes via EGD1.

It localises to the cytoplasm. Its subcellular location is the nucleus. Functionally, component of the nascent polypeptide-associated complex (NAC), a dynamic component of the ribosomal exit tunnel, protecting the emerging polypeptides from interaction with other cytoplasmic proteins to ensure appropriate nascent protein targeting. The NAC complex also promotes mitochondrial protein import by enhancing productive ribosome interactions with the outer mitochondrial membrane and blocks the inappropriate interaction of ribosomes translating non-secretory nascent polypeptides with translocation sites in the membrane of the endoplasmic reticulum. EGD1 may act as a transcription factor that exert a negative effect on the expression of several genes that are transcribed by RNA polymerase II. This is Nascent polypeptide-associated complex subunit beta (EGD1) from Lodderomyces elongisporus (strain ATCC 11503 / CBS 2605 / JCM 1781 / NBRC 1676 / NRRL YB-4239) (Yeast).